The following is a 111-amino-acid chain: Small ribosomal subunit protein bS16 (111 aa).

Residues 92–111 (MDVKAKNRKARSSKQEAKEA) are disordered.

Belongs to the bacterial ribosomal protein bS16 family.

This chain is Small ribosomal subunit protein bS16, found in Rickettsia akari (strain Hartford).